The primary structure comprises 254 residues: Flavin-dependent thymidylate synthase (254 aa).

Positions 7-237 constitute a ThyX domain; the sequence is LRVQLIARTE…PAVFADFEIY (231 aa). FAD contacts are provided by residues serine 71, 95–97, and glutamine 103; that span reads RHR. DUMP-binding positions include 92-95, 103-107, and arginine 176; these read ELIR and QLSQR. The ThyX motif motif lies at 95–105; the sequence is RHRHFSYSQLS. Residues 192 to 194 and histidine 198 contribute to the FAD site; that span reads NYR. Arginine 203 is a binding site for dUMP. Catalysis depends on arginine 203, which acts as the Involved in ionization of N3 of dUMP, leading to its activation.

This sequence belongs to the thymidylate synthase ThyX family. As to quaternary structure, homotetramer. FAD serves as cofactor.

It catalyses the reaction dUMP + (6R)-5,10-methylene-5,6,7,8-tetrahydrofolate + NADPH + H(+) = dTMP + (6S)-5,6,7,8-tetrahydrofolate + NADP(+). It participates in pyrimidine metabolism; dTTP biosynthesis. Its function is as follows. Catalyzes the reductive methylation of 2'-deoxyuridine-5'-monophosphate (dUMP) to 2'-deoxythymidine-5'-monophosphate (dTMP) while utilizing 5,10-methylenetetrahydrofolate (mTHF) as the methyl donor, and NADPH and FADH(2) as the reductant. This is Flavin-dependent thymidylate synthase from Mycobacterium sp. (strain JLS).